The sequence spans 376 residues: Erythronate-4-phosphate dehydrogenase (376 aa).

The substrate site is built by S45 and T67. D147 provides a ligand contact to NAD(+). Residue R209 is part of the active site. D233 serves as a coordination point for NAD(+). E238 is an active-site residue. H255 (proton donor) is an active-site residue. NAD(+) is bound at residue G258. Y259 serves as a coordination point for substrate.

This sequence belongs to the D-isomer specific 2-hydroxyacid dehydrogenase family. PdxB subfamily. In terms of assembly, homodimer.

The protein resides in the cytoplasm. It carries out the reaction 4-phospho-D-erythronate + NAD(+) = (R)-3-hydroxy-2-oxo-4-phosphooxybutanoate + NADH + H(+). It participates in cofactor biosynthesis; pyridoxine 5'-phosphate biosynthesis; pyridoxine 5'-phosphate from D-erythrose 4-phosphate: step 2/5. Functionally, catalyzes the oxidation of erythronate-4-phosphate to 3-hydroxy-2-oxo-4-phosphonooxybutanoate. The sequence is that of Erythronate-4-phosphate dehydrogenase from Shewanella baltica (strain OS223).